The following is a 999-amino-acid chain: Hypoxia up-regulated protein 1 (999 aa).

The first 32 residues, 1 to 32 (MAATVRRQRPRRLLCWALVAVLLADLLALSDT), serve as a signal peptide directing secretion. N-linked (GlcNAc...) asparagine glycans are attached at residues asparagine 155, asparagine 222, and asparagine 515. Serine 567 carries the post-translational modification Phosphoserine. Positions 567–694 (SPEEESTLTK…KKPKPARKQK (128 aa)) are disordered. A compositionally biased stretch (polar residues) spans 574–583 (LTKLGNTISS). N-linked (GlcNAc...) asparagine glycosylation is present at asparagine 596. Basic and acidic residues-rich tracts occupy residues 611 to 626 (GSKD…KEEA) and 641 to 668 (PKGD…KPNE). A compositionally biased stretch (low complexity) spans 669-680 (KGQAGPEGAAPA). Asparagine 830, asparagine 862, and asparagine 869 each carry an N-linked (GlcNAc...) asparagine glycan. An N6-acetyllysine modification is found at lysine 883. Residues 909 to 999 (AKFTKPRPRP…QKRPSKNDEL (91 aa)) form a disordered region. 2 N-linked (GlcNAc...) asparagine glycosylation sites follow: asparagine 922 and asparagine 931. Residues 949 to 962 (EEAKPILEPDKEET) show a composition bias toward basic and acidic residues. The Prevents secretion from ER motif lies at 996 to 999 (NDEL).

It belongs to the heat shock protein 70 family. As to quaternary structure, part of a large chaperone multiprotein complex comprising DNAJB11, HSP90B1, HSPA5, HYOU, PDIA2, PDIA4, PDIA6, PPIB, SDF2L1, UGGT1 and very small amounts of ERP29, but not, or at very low levels, CALR nor CANX.

It is found in the endoplasmic reticulum lumen. Has a pivotal role in cytoprotective cellular mechanisms triggered by oxygen deprivation. Promotes HSPA5/BiP-mediated ATP nucleotide exchange and thereby activates the unfolded protein response (UPR) pathway in the presence of endoplasmic reticulum stress. May play a role as a molecular chaperone and participate in protein folding. The protein is Hypoxia up-regulated protein 1 (Hyou1) of Mus musculus (Mouse).